Here is a 175-residue protein sequence, read N- to C-terminus: Large ribosomal subunit protein eL14 (175 aa).

Residues 150-175 (KAAKMDSTEGAKRRMQKAIAARKAKK) are disordered. The span at 152–161 (AKMDSTEGAK) shows a compositional bias: basic and acidic residues. The segment covering 162 to 175 (RRMQKAIAARKAKK) has biased composition (basic residues).

It belongs to the eukaryotic ribosomal protein eL14 family.

Functionally, component of the large ribosomal subunit. The ribosome is a large ribonucleoprotein complex responsible for the synthesis of proteins in the cell. The chain is Large ribosomal subunit protein eL14 (RPL14) from Leishmania donovani.